We begin with the raw amino-acid sequence, 762 residues long: 5-methyltetrahydropteroyltriglutamate--homocysteine methyltransferase (762 aa).

Residues 17-20 (REWK) and K111 contribute to the 5-methyltetrahydropteroyltri-L-glutamate site. Residues 435–437 (IGS) and E488 contribute to the L-homocysteine site. L-methionine is bound by residues 435–437 (IGS) and E488. Residues 519-520 (RC) and W565 each bind 5-methyltetrahydropteroyltri-L-glutamate. L-homocysteine is bound at residue D603. D603 provides a ligand contact to L-methionine. A 5-methyltetrahydropteroyltri-L-glutamate-binding site is contributed by E609. Zn(2+) is bound by residues H645, C647, and E669. Catalysis depends on H698, which acts as the Proton donor. C730 contributes to the Zn(2+) binding site.

Belongs to the vitamin-B12 independent methionine synthase family. Requires Zn(2+) as cofactor.

It carries out the reaction 5-methyltetrahydropteroyltri-L-glutamate + L-homocysteine = tetrahydropteroyltri-L-glutamate + L-methionine. Its pathway is amino-acid biosynthesis; L-methionine biosynthesis via de novo pathway; L-methionine from L-homocysteine (MetE route): step 1/1. In terms of biological role, catalyzes the transfer of a methyl group from 5-methyltetrahydrofolate to homocysteine resulting in methionine formation. The chain is 5-methyltetrahydropteroyltriglutamate--homocysteine methyltransferase from Bacillus anthracis (strain CDC 684 / NRRL 3495).